The chain runs to 431 residues: MHRSTFIRTSGTSSRTLTARYRSQYTGLLVARVLFSTSTTRAQGGNPRSPLQIFRDTFKKEWEKSQELQENIKTLQDASGKLGESEAYKKAREAYLKAQRGSTIVGKTLKKTGETMEHIATKAWESELGKNTRKAAAATAKKLDESFEPVRQTKIYKEVSEVIDDGESSRYGGFITKEQRRLKRERDLASGKRHRAVKSNEDAGTAVVATNIESKESFGKKVEDFKEKTVVGRSIQSLKNKLWDESENPLIVVMRKITNKVGGFFAETESSRVYSQFKLMDPTFSNESFTRHLREYIVPEILEAYVKGDVKVLKKWFSEAPFNVYAAQQKIFKEQDVYADGRILDIRGVEIVSAKLLAPQDIPVLVVGCRAQEINLYRKKKTGEIAAGDEANILMSSYAMVFTRDPEQIDDDETEGWKILEFVRGGSRQFT.

The interval 43-209 is interaction with SSC1; sequence QGGNPRSPLQ…NEDAGTAVVA (167 aa). 101–108 lines the ATP pocket; it reads GSTIVGKT.

It belongs to the Tim44 family. As to quaternary structure, component of the PAM complex, at least composed of SSC1 (mtHsp70), MGE1, TIM44, PAM16/TIM16, PAM17 and PAM18/TIM14. Forms part of the receptor complex that consists of at least 3 different proteins (TIM17, TIM23, TIM44).

The protein localises to the mitochondrion inner membrane. In terms of biological role, essential component of the PAM complex, a complex required for the translocation of transit peptide-containing proteins from the inner membrane into the mitochondrial matrix in an ATP-dependent manner. Recruits mitochondrial HSP70 and its co-chaperone (MGE1) to drive protein translocation into the matrix using ATP as an energy source. The protein is Mitochondrial import inner membrane translocase subunit TIM44 (TIM44) of Saccharomyces cerevisiae (strain ATCC 204508 / S288c) (Baker's yeast).